The sequence spans 255 residues: Kallikrein-4 (255 aa).

The signal sequence occupies residues 1–25 (MMVTARTPWGWFLGCLILEVTGASA). The propeptide occupies 26–31 (SSVSSR). In terms of domain architecture, Peptidase S1 spans 32–253 (IIQGQDCSPH…FTNWIQTIIQ (222 aa)). Zn(2+) is bound at residue His41. A disulfide bridge links Cys57 with Cys73. His72 (charge relay system) is an active-site residue. Zn(2+) is bound at residue Glu92. Residue Asp117 is the Charge relay system of the active site. 2 N-linked (GlcNAc...) asparagine glycosylation sites follow: Asn124 and Asn170. Disulfide bonds link Cys149–Cys214, Cys179–Cys193, and Cys204–Cys229. The active-site Charge relay system is the Ser208.

The protein belongs to the peptidase S1 family. Kallikrein subfamily. In terms of processing, N-glycosylated. The N-glycan structures are of complex diantennary or triantennary type, which may be further modified with up to 2 sialic acid residues.

It is found in the secreted. In terms of biological role, has a major role in enamel formation. Required during the maturation stage of tooth development for clearance of enamel proteins and normal structural patterning of the crystalline matrix. The chain is Kallikrein-4 from Mus musculus (Mouse).